Consider the following 185-residue polypeptide: MVMMSKQLTAQAPVDPIVLGKMGSSYGIRGWLRVFSSTEDAESIFDYQPWFIQKAGQWQQVQLESWKHHNQDMIIKLKGVDDRDAANLLTNCEIVVDSSQLPQLEEGDYYWKDLMGCQVVTTEGYDLGKVVDMMETGSNDVLVIKANLKDAFGIKERLVPFLDGQVIKKVDLTTRSIEVDWDPGF.

The 80-residue stretch at 106–185 (EGDYYWKDLM…SIEVDWDPGF (80 aa)) folds into the PRC barrel domain.

This sequence belongs to the RimM family. Binds ribosomal protein uS19.

The protein localises to the cytoplasm. An accessory protein needed during the final step in the assembly of 30S ribosomal subunit, possibly for assembly of the head region. Essential for efficient processing of 16S rRNA. May be needed both before and after RbfA during the maturation of 16S rRNA. It has affinity for free ribosomal 30S subunits but not for 70S ribosomes. The chain is Ribosome maturation factor RimM from Shigella dysenteriae serotype 1 (strain Sd197).